The primary structure comprises 248 residues: Trypsin I-P38 (248 aa).

The first 15 residues, 1–15 (MKFLVLVAFLGVAVA), serve as a signal peptide directing secretion. Residues 16–25 (FPISDEDDDK) constitute a propeptide, activation peptide. Positions 26–246 (IVGGYSCARS…YVSWIKTTMS (221 aa)) constitute a Peptidase S1 domain. Intrachain disulfides connect Cys-32/Cys-162, Cys-50/Cys-66, Cys-134/Cys-235, Cys-141/Cys-208, Cys-173/Cys-187, and Cys-198/Cys-222. The active-site Charge relay system is the His-65. Positions 77, 79, and 87 each coordinate Ca(2+). The active-site Charge relay system is Asp-109. Ser-202 acts as the Charge relay system in catalysis.

The protein belongs to the peptidase S1 family. Ca(2+) is required as a cofactor. High levels are seen in the pancreas while lower levels are found in the liver, spleen and thymus.

The protein resides in the secreted. Its subcellular location is the extracellular space. It catalyses the reaction Preferential cleavage: Arg-|-Xaa, Lys-|-Xaa.. This chain is Trypsin I-P38, found in Gallus gallus (Chicken).